A 404-amino-acid polypeptide reads, in one-letter code: Glucosyl-3-phosphoglycerate synthase (404 aa).

Aspartate 146 is a binding site for a divalent metal cation. (2R)-3-phosphoglycerate is bound at residue 188-190 (GRV). Residue histidine 270 coordinates a divalent metal cation.

The protein belongs to the glycosyltransferase 2 family. Requires Mn(2+) as cofactor. Co(2+) serves as cofactor. The cofactor is Mg(2+).

The catalysed reaction is an NDP-alpha-D-glucose + (2R)-3-phosphoglycerate = (2R)-2-O-(alpha-D-glucopyranosyl)-3-phospho-glycerate + a ribonucleoside 5'-diphosphate + H(+). Involved in the biosynthesis of 6-O-methylglucose lipopolysaccarides (MGLPs). Catalyzes the transfer of a glucose (Glc) moiety from uridine diphosphate (UDP-Glc) to the position 2 of 3-phospho-D-glycerate (3-PGA) to form glucosyl-3-phosphoglycerate (GPG). In Methanococcoides burtonii (strain DSM 6242 / NBRC 107633 / OCM 468 / ACE-M), this protein is Glucosyl-3-phosphoglycerate synthase.